Here is an 884-residue protein sequence, read N- to C-terminus: Kinesin-like protein KIN-7C (884 aa).

One can recognise a Kinesin motor domain in the interval 33 to 355; sequence RIQVLVRLRP…LLFGSCAKEV (323 aa). ATP is bound at residue 119–126; the sequence is GQTSSGKT. A coiled-coil region spans residues 364-435; sequence VMSDKALVKH…LQDLLQSVGD (72 aa). The segment at 434 to 530 is disordered; it reads GDHDLNRQVQ…VNSRHSRPSG (97 aa). Low complexity predominate over residues 449–460; the sequence is RSPPSVGMPPSV. The segment covering 461–483 has biased composition (basic and acidic residues); that stretch reads SRDDSSQVSHDDSDLYKEVRCIE. Residues 498–523 are compositionally biased toward polar residues; that stretch reads GESSSPQDSNMNSGLHGNDSNASVNS.

The protein belongs to the TRAFAC class myosin-kinesin ATPase superfamily. Kinesin family. KIN-7 subfamily.

The sequence is that of Kinesin-like protein KIN-7C from Oryza sativa subsp. japonica (Rice).